The following is a 1209-amino-acid chain: Protein FAM83H (1209 aa).

The interval 1–286 (MARRSQSSSQ…LFAQSEPLVP (286 aa)) is DUF1669. The segment at 1 to 286 (MARRSQSSSQ…LFAQSEPLVP (286 aa)) is mediates interaction with CSNK1A1 and is required for FAM83H activity in keratin cytoskeleton organization. S512, S513, S515, S522, S639, and S660 each carry phosphoserine. 3 disordered regions span residues 512 to 545 (SSAS…NLGQ), 615 to 664 (RDLL…FRSR), and 735 to 760 (KGPA…VVSQ). T749 carries the post-translational modification Phosphothreonine. 4 positions are modified to phosphoserine: S752, S778, S806, and S871. A disordered region spans residues 829–1056 (AQGRSLSPQG…EERGSRVRLA (228 aa)). At T873 the chain carries Phosphothreonine. A phosphoserine mark is found at S882, S893, S904, and S915. Residues 915–942 (SPTSGFPNRRGSPTTGLMEQKGSPTSTY) show a composition bias toward polar residues. At T917 the chain carries Phosphothreonine. Residue S926 is modified to Phosphoserine. T928 carries the phosphothreonine modification. A phosphoserine mark is found at S937, S948, S959, S970, S977, S1035, S1041, and S1057. T1072 carries the phosphothreonine modification. 2 disordered regions span residues 1076–1147 (LEQI…EERD) and 1174–1193 (EAGS…RDSK). A phosphoserine mark is found at S1080, S1098, and S1177.

The protein belongs to the FAM83 family. In terms of assembly, directly interacts (via DUF1669) with casein kinase isoforms CSNK1A1, CSNK1A1L, CSNK1D and CSNK1E. Interaction with CSNK1A1 recruits CSNK1A1 to keratin filaments. Interacts with KRT18 and probably other keratins. Expressed in tooth follicle, eye, liver and kidney.

It localises to the cytoplasm. It is found in the cytoskeleton. Functionally, may play a major role in the structural organization and calcification of developing enamel. May play a role in keratin cytoskeleton disassembly by recruiting CSNK1A1 to keratin filaments. Thereby, it may regulate epithelial cell migration. The sequence is that of Protein FAM83H from Mus musculus (Mouse).